A 237-amino-acid chain; its full sequence is Large ribosomal subunit protein uL1 (237 aa).

The protein belongs to the universal ribosomal protein uL1 family. Part of the 50S ribosomal subunit.

Functionally, binds directly to 23S rRNA. The L1 stalk is quite mobile in the ribosome, and is involved in E site tRNA release. Its function is as follows. Protein L1 is also a translational repressor protein, it controls the translation of the L11 operon by binding to its mRNA. This is Large ribosomal subunit protein uL1 from Nocardia farcinica (strain IFM 10152).